We begin with the raw amino-acid sequence, 256 residues long: Necrosis-inducing protein NPP1 (256 aa).

A Conserved undecapeptide motif motif is present at residues 111–121; that stretch reads AIMYAWYFPKG. A Conserved heptapeptide motif motif is present at residues 133-139; the sequence is GHRHEWE.

It belongs to the Necrosis inducing protein (NPP1) family.

The protein localises to the secreted. Secreted effector that acts as a pathogen-associated molecular pattern (PAMP) recognized by the plant immune system. This Phytophthora cinnamomi (Cinnamon fungus) protein is Necrosis-inducing protein NPP1.